Consider the following 187-residue polypeptide: Elongation factor P (187 aa).

It belongs to the elongation factor P family.

It is found in the cytoplasm. It participates in protein biosynthesis; polypeptide chain elongation. Its function is as follows. Involved in peptide bond synthesis. Stimulates efficient translation and peptide-bond synthesis on native or reconstituted 70S ribosomes in vitro. Probably functions indirectly by altering the affinity of the ribosome for aminoacyl-tRNA, thus increasing their reactivity as acceptors for peptidyl transferase. The chain is Elongation factor P from Wolinella succinogenes (strain ATCC 29543 / DSM 1740 / CCUG 13145 / JCM 31913 / LMG 7466 / NCTC 11488 / FDC 602W) (Vibrio succinogenes).